We begin with the raw amino-acid sequence, 394 residues long: Elongation factor Tu (394 aa).

A tr-type G domain is found at 10 to 204 (KPHINVGTIG…FLDTYIPEPK (195 aa)). The tract at residues 19–26 (GHVDHGKT) is G1. 19–26 (GHVDHGKT) is a binding site for GTP. Mg(2+) is bound at residue T26. Residues 60 to 64 (GITIN) are G2. The tract at residues 81-84 (DCPG) is G3. GTP is bound by residues 81-85 (DCPGH) and 136-139 (NKCD). The segment at 136-139 (NKCD) is G4. The tract at residues 174-176 (SAL) is G5.

Belongs to the TRAFAC class translation factor GTPase superfamily. Classic translation factor GTPase family. EF-Tu/EF-1A subfamily. As to quaternary structure, monomer.

It is found in the cytoplasm. It carries out the reaction GTP + H2O = GDP + phosphate + H(+). Its function is as follows. GTP hydrolase that promotes the GTP-dependent binding of aminoacyl-tRNA to the A-site of ribosomes during protein biosynthesis. In Buchnera aphidicola subsp. Schizaphis graminum (strain Sg), this protein is Elongation factor Tu.